A 230-amino-acid chain; its full sequence is Fibronectin type III domain-containing protein 4 (230 aa).

Residues 1 to 40 (MPGCLPADSVGTMASLMPLSPYLSPTVLLLVSCDLGFVRA) form the signal peptide. At 41 to 163 (DRPPSPVNVT…GLDGERPLQT (123 aa)) the chain is on the extracellular side. The 94-residue stretch at 43 to 136 (PPSPVNVTVT…PRVHFRTLKG (94 aa)) folds into the Fibronectin type-III domain. N-linked (GlcNAc...) asparagine glycans are attached at residues asparagine 48 and asparagine 143. The disordered stretch occupies residues 118 to 156 (GLRGESPPGPRVHFRTLKGSDRLPSNSSSPGDITVEGLD). The chain crosses the membrane as a helical span at residues 164-184 (GEVVIIVVVLLMWAAVIGLFC). Topologically, residues 185–230 (RQYDIIKDNDSNNNPKEKGKGPEQSPQGRPVGTRQKKSPSINTIDV) are cytoplasmic. Over residues 193–205 (NDSNNNPKEKGKG) the composition is skewed to basic and acidic residues. The disordered stretch occupies residues 193–230 (NDSNNNPKEKGKGPEQSPQGRPVGTRQKKSPSINTIDV).

Its subcellular location is the membrane. The protein localises to the secreted. Its function is as follows. Has anti-inflammatory properties. In the colon, acts on macrophages to down-regulate inflammation. May suppress osteoclastogenesis and mature osteoclast resorptive function. In white adipose tissue, decreases local inflammation, via interaction with GPR116. Also required for proper systemic glucose tolerance, specifically sensitizing white adipocytes to insulin and promoting glucose uptake. The insulin sensitizing function in adipose tissue is mediated by interaction with ADGRF5/GPR116 and activation of cAMP signaling. The sequence is that of Fibronectin type III domain-containing protein 4 (FNDC4) from Bos taurus (Bovine).